Consider the following 1130-residue polypeptide: MSEELKSLIQPHIDSFDFFTDHGIDLVLKDSEPLYFEHNSTQYKIRFTDLKLSRPTRNIVEKEIKLYPNESRETGTTYNAPFKGAIGLYEVNEMDEMDDGTEVDYNKQEPTHTFEVDLGRLPIMVKSRYCHLNGMSPEKLIESREEELEQGGYFIVNGNEKVVRMLVMTKANHPVALHRKAWTNRGPGYTKNGITIRCVRPDRSSITNNLHYINDGQTTLRFLYRRQEFFLPATLLLKALKDTTEKEIYENIVQGDNENTFLTDRVELSLREQKINNINTQEEVLDYIGSRFRARTQFPPSFSNIKIGRWFINQFVFVHLPNYNDKYNLLILMIQKLYAMVGGKCGTDNIDSPAFQEVLLAGHIYGMILKEKLTEYLESTKSFVLKSFEDKKKSGDKLPDALKKVLDKNFKIADRFSYFLATGNLRSSSGIDLQQTSGFCVIADKLNFLRFISHFRSIHRGAFFATMKTTAIRKLMPESWGFFCPVHTPDGAPCGLLNHLSSNCLVTVDAAQDPTVQKAQTLLPSFLAAHGMLPIDMVSVYQHQYLTITLDGRVLGKIEPKAGEEMVKMLRYLRSMGNEPSIPKTMEISYAPPTNVENGQYSGISLFTTGARFMRPVVNLTSGQNELIGPQEQLYMEIAVVPHEVIKGVTTHIETSPTAMFSLLANLTPFSDYNQSPRNMYQCQMAKQTMGTPLHSYPFRTDNKLYKVQNVQKPIVHTKNQFKFRCNDYPHGCNAVIAVISNTGYDMEDAMIINKSAYERGFGHGSVYKNEYIDLDQGLSRFEQKKTFFGRPNTVVDELDKFIDTDGLPFVGRLIKPGEPYYTYIRPSDGRQVTKDYKGKEEAYIEDVRIIFGPNGATRDPSKINNICVKLRFNRNPVIGDKFSSRHGQKGVLSQLWPEINMPFTESGMKPDVIINPNAFPSRMTIGMLVEILAGKAGAIHGKFQDATAFQFDENNTAIDFFGEQLAKAGFNRFGNEQMYSGTTGKEFECEIFFGVCYYQRLRHMVKDKYQVRALGKVNALTRQPIKGRKVGGGIRFGEMERDSLLAHGASFCLNDRLMKSSDFAKIKVCKLCGSTLTIYSKKDYSNQTVSECKSCKSSDSIATISIPYVFTYLVAELAAVNITMKLQVS.

The segment at 1070–1096 (CKLCGSTLTIYSKKDYSNQTVSECKSC) adopts a C4-type zinc-finger fold.

The protein belongs to the RNA polymerase beta chain family. In terms of assembly, component of the RNA polymerase I (Pol I) complex consisting of 14 subunits.

The protein localises to the nucleus. The protein resides in the nucleolus. It carries out the reaction RNA(n) + a ribonucleoside 5'-triphosphate = RNA(n+1) + diphosphate. Functionally, DNA-dependent RNA polymerase catalyzes the transcription of DNA into RNA using the four ribonucleoside triphosphates as substrates. Second largest core component of RNA polymerase I which synthesizes ribosomal RNA precursors. Proposed to contribute to the polymerase catalytic activity and forms the polymerase active center together with the largest subunit. Pol I is composed of mobile elements and RPA2 is part of the core element with the central large cleft and probably a clamp element that moves to open and close the cleft. The polypeptide is DNA-directed RNA polymerase I subunit rpa2 (polr1b) (Dictyostelium discoideum (Social amoeba)).